The chain runs to 455 residues: Argininosuccinate lyase (455 aa).

This sequence belongs to the lyase 1 family. Argininosuccinate lyase subfamily.

The protein localises to the cytoplasm. The enzyme catalyses 2-(N(omega)-L-arginino)succinate = fumarate + L-arginine. It functions in the pathway amino-acid biosynthesis; L-arginine biosynthesis; L-arginine from L-ornithine and carbamoyl phosphate: step 3/3. This Shewanella sp. (strain ANA-3) protein is Argininosuccinate lyase.